The chain runs to 557 residues: Arginine--tRNA ligase (557 aa).

Positions 132-142 (ANPTGLLHMGN) match the 'HIGH' region motif.

Belongs to the class-I aminoacyl-tRNA synthetase family. In terms of assembly, monomer.

The protein resides in the cytoplasm. It carries out the reaction tRNA(Arg) + L-arginine + ATP = L-arginyl-tRNA(Arg) + AMP + diphosphate. This chain is Arginine--tRNA ligase, found in Carboxydothermus hydrogenoformans (strain ATCC BAA-161 / DSM 6008 / Z-2901).